A 409-amino-acid chain; its full sequence is MAFGKSLFHAIGRVSLVRQIAAGLALGIVIGSVSPQLGLAAGLFGSLFVGALKAVAPVLVFILVAATIAQHQKGNKAHIRPIIVLYLIGTFSAALTAVIAGMVFPTHIVLAGAGDVSAAPPSGIVEVLKSLLMNLVANPINAIANANYIGILAWALVLGAALRNHGSDVTRQVVADLAEAVSTVVKWIIRFAPLGIFGLVSSTIAETGFGALAGYAKLLAVLLGCMAFIALAVNPAIVWWKIRRNPYPLVFTCLRESGVYAFFTRSSAANIPVNMALAKKLGLHEDTYSISIPLGATVNMGGAAITITVLAMAAAHTQGIQVDFATALLLSLVATVSACGASGVAGGSLLLIPLACSLFGISNDVAMQVVAVGFIIGVIQDSAETALNSSTDVLFTAAADLGRQRNRAE.

9 helical membrane passes run 24–44 (LALGIVIGSVSPQLGLAAGLF), 48–68 (FVGALKAVAPVLVFILVAATI), 82–102 (IIVLYLIGTFSAALTAVIAGM), 142–162 (AIANANYIGILAWALVLGAAL), 194–214 (LGIFGLVSSTIAETGFGALAG), 218–238 (LLAVLLGCMAFIALAVNPAIV), 292–312 (IPLGATVNMGGAAITITVLAM), 319–339 (GIQVDFATALLLSLVATVSAC), and 365–385 (VAMQVVAVGFIIGVIQDSAET).

The protein belongs to the dicarboxylate/amino acid:cation symporter (DAACS) (TC 2.A.23) family.

It is found in the cell inner membrane. The enzyme catalyses L-serine(in) + Na(+)(in) = L-serine(out) + Na(+)(out). The catalysed reaction is L-threonine(in) + Na(+)(in) = L-threonine(out) + Na(+)(out). Functionally, involved in the import of serine and threonine into the cell, with the concomitant import of sodium (symport system). In Neisseria gonorrhoeae (strain NCCP11945), this protein is Serine/threonine transporter SstT.